Consider the following 698-residue polypeptide: Polyribonucleotide nucleotidyltransferase (698 aa).

The Mg(2+) site is built by Asp485 and Asp491. The region spanning 552–611 (PRITTIKINPEKIRDVIGKGGAVIRALTEETGTTIELDDNGTVKIASSNGEATKEAIRRI) is the KH domain. One can recognise an S1 motif domain in the interval 621–689 (GRIYNGKVIR…RQGRVRLSIK (69 aa)).

The protein belongs to the polyribonucleotide nucleotidyltransferase family. Component of the RNA degradosome, which is a multiprotein complex involved in RNA processing and mRNA degradation. Mg(2+) is required as a cofactor.

The protein resides in the cytoplasm. The catalysed reaction is RNA(n+1) + phosphate = RNA(n) + a ribonucleoside 5'-diphosphate. In terms of biological role, involved in mRNA degradation. Catalyzes the phosphorolysis of single-stranded polyribonucleotides processively in the 3'- to 5'-direction. In Shewanella frigidimarina (strain NCIMB 400), this protein is Polyribonucleotide nucleotidyltransferase.